The chain runs to 449 residues: PC-esterase domain-containing protein 1A (449 aa).

Belongs to the PC-esterase family.

In Mus musculus (Mouse), this protein is PC-esterase domain-containing protein 1A (Pced1a).